The chain runs to 90 residues: Small ribosomal subunit protein uS15 (90 aa).

This sequence belongs to the universal ribosomal protein uS15 family. Part of the 30S ribosomal subunit. Forms a bridge to the 50S subunit in the 70S ribosome, contacting the 23S rRNA.

Functionally, one of the primary rRNA binding proteins, it binds directly to 16S rRNA where it helps nucleate assembly of the platform of the 30S subunit by binding and bridging several RNA helices of the 16S rRNA. Its function is as follows. Forms an intersubunit bridge (bridge B4) with the 23S rRNA of the 50S subunit in the ribosome. This is Small ribosomal subunit protein uS15 from Aliarcobacter butzleri (strain RM4018) (Arcobacter butzleri).